We begin with the raw amino-acid sequence, 461 residues long: Transforming growth factor beta-1-induced transcript 1 protein (461 aa).

Methionine 1 is modified (N-acetylmethionine). A disordered region spans residues 1 to 87 (MEDLDALLSD…PFSSSSGVLG (87 aa)). The tract at residues 1 to 200 (MEDLDALLSD…GSPSPPEPTG (200 aa)) is transcription activation. Residues 1–240 (MEDLDALLSD…CNKPIAGQVV (240 aa)) form an interaction with PTK2B/PYK2 region. The LD motif 1 motif lies at 3 to 15 (DLDALLSDLETTT). Phosphothreonine is present on threonine 33. The residue at position 38 (tyrosine 38) is a Phosphotyrosine. Over residues 40–52 (HQPQTGSGESSGA) the composition is skewed to polar residues. Tyrosine 60 is subject to Phosphotyrosine; by FAK2 and FYN. Residue serine 68 is modified to Phosphoserine. Positions 83-136 (SGVLGTGLCELDRLLQELNATQFNITDEIMSQFPSSKVASGEQKEDQSEDKKRP) are interaction with PTK2/FAK1. The short motif at 92-104 (ELDRLLQELNATQ) is the LD motif 2 element. The segment at 116–152 (PSSKVASGEQKEDQSEDKKRPSLPSSPSPGLPKASAT) is disordered. The segment covering 124-135 (EQKEDQSEDKKR) has biased composition (basic and acidic residues). 6 positions are modified to phosphoserine: serine 137, serine 140, serine 141, serine 143, serine 164, and serine 186. Positions 157 to 168 (ELDRLMASLSDF) match the LD motif 3 motif. The segment at 172–205 (NHLPASGPTQPPVVSSTNEGSPSPPEPTGKGSLD) is disordered. The segment covering 183–192 (PVVSSTNEGS) has biased composition (polar residues). Phosphothreonine is present on threonine 188. Residues serine 192 and serine 194 each carry the phosphoserine modification. Residues 203–215 (SLDTMLGLLQSDL) carry the LD motif 4 motif. 4 consecutive LIM zinc-binding domains span residues 226-285 (GLCG…RFSP), 286-343 (RCGF…QLFA), 344-403 (PRCQ…RRGS), and 404-461 (LCAT…KLFG). The residue at position 403 (serine 403) is a Phosphoserine. Threonine 407 bears the Phosphothreonine mark.

This sequence belongs to the paxillin family. In terms of assembly, homooligomer. Interacts with PPARG. Interacts with TRAF4. Interacts with CRIP2. Interacts with HSPB1. Interacts with ILK. Interacts with LIMS1 and LIMS2. Interacts with NCK2. Interacts with NUDT16L1. Interacts with PAK. Interacts with PTPN12. Interacts with TCF3. Interacts with TCF7L2. Interacts with VCL. Interacts (via LD motif 3) with GIT1. Also interacts with GIT2. Forms a complex with ARHGEF7. Interacts with AR/androgen receptor in a ligand-dependent manner. Interacts with CSK. Interacts with PTK2/FAK1 and PTK2B/PYK2. Interacts with SLC6A3 and SLC6A4. Interacts with NR3C1. Interacts with SMAD3. Interacts with MAPK15. Interacts with SRC. Interacts with LYN. Interacts with talin. Interacts (via LIM zinc-binding domain 2) with CBLC (via RING-type zinc finger); the interaction is direct and enhances CBLC E3 ubiquitin-protein ligase activity. Interacts with PARVA. Interacts with PXN. In terms of processing, phosphorylated by gonadotropin-releasing hormone-activated SRC. In terms of tissue distribution, expressed in platelets, smooth muscle and prostate stromal cells (at protein level).

The protein resides in the cell junction. Its subcellular location is the focal adhesion. The protein localises to the nucleus matrix. It localises to the cytoplasm. It is found in the cytoskeleton. Its function is as follows. Functions as a molecular adapter coordinating multiple protein-protein interactions at the focal adhesion complex and in the nucleus. Links various intracellular signaling modules to plasma membrane receptors and regulates the Wnt and TGFB signaling pathways. May also regulate SLC6A3 and SLC6A4 targeting to the plasma membrane hence regulating their activity. In the nucleus, functions as a nuclear receptor coactivator regulating glucocorticoid, androgen, mineralocorticoid and progesterone receptor transcriptional activity. May play a role in the processes of cell growth, proliferation, migration, differentiation and senescence. May have a zinc-dependent DNA-binding activity. In Homo sapiens (Human), this protein is Transforming growth factor beta-1-induced transcript 1 protein (TGFB1I1).